The chain runs to 109 residues: Ubiquitin-related modifier 1 homolog (109 aa).

Gly109 is subject to 1-thioglycine. Gly109 participates in a covalent cross-link: Glycyl lysine isopeptide (Gly-Lys) (interchain with K-? in acceptor proteins).

Belongs to the URM1 family. Post-translationally, C-terminal thiocarboxylation occurs in 2 steps, it is first acyl-adenylated (-COAMP) via the hesA/moeB/thiF part of the MOCS3 homolog, then thiocarboxylated (-COSH) via the rhodanese domain of the MOCS3 homolog.

The protein localises to the cytoplasm. It participates in tRNA modification; 5-methoxycarbonylmethyl-2-thiouridine-tRNA biosynthesis. Acts as a sulfur carrier required for 2-thiolation of mcm(5)S(2)U at tRNA wobble positions of cytosolic tRNA(Lys), tRNA(Glu) and tRNA(Gln). Serves as sulfur donor in tRNA 2-thiolation reaction by being thiocarboxylated (-COSH) at its C-terminus by MOCS3. The sulfur is then transferred to tRNA to form 2-thiolation of mcm(5)S(2)U. Also acts as a ubiquitin-like protein (UBL) that is covalently conjugated via an isopeptide bond to lysine residues of target proteins. The thiocarboxylated form serves as substrate for conjugation and oxidative stress specifically induces the formation of UBL-protein conjugates. The chain is Ubiquitin-related modifier 1 homolog from Anopheles gambiae (African malaria mosquito).